The sequence spans 1094 residues: DNA polymerase delta catalytic subunit (1094 aa).

Positions 1003, 1006, 1016, and 1019 each coordinate Zn(2+). A CysA-type zinc finger spans residues 1003 to 1019 (CIGCNSSIKKPPLCNHC). [4Fe-4S] cluster contacts are provided by cysteine 1049, cysteine 1052, cysteine 1062, and cysteine 1067. Positions 1049–1067 (CQRCQGNLHVDVICMNRDC) match the CysB motif motif.

This sequence belongs to the DNA polymerase type-B family. Heterodimer composed of a catalytic subunit POLD and a small regulatory subunit. [4Fe-4S] cluster is required as a cofactor. The cofactor is Mg(2+).

The protein resides in the nucleus. The catalysed reaction is DNA(n) + a 2'-deoxyribonucleoside 5'-triphosphate = DNA(n+1) + diphosphate. Its activity is regulated as follows. The small regulatory subunit delta and PCNA1 increase POLD catalytic activity. Functionally, this polymerase possesses two enzymatic activities: DNA synthesis (polymerase) and an exonucleolytic activity that degrades single-stranded DNA in the 3'- to 5'-direction. In Plasmodium falciparum (isolate K1 / Thailand), this protein is DNA polymerase delta catalytic subunit (POLD).